A 465-amino-acid polypeptide reads, in one-letter code: Sodium-dependent phosphate transport protein 1 (465 aa).

N-linked (GlcNAc...) asparagine glycans are attached at residues Asn-39, Asn-47, and Asn-56. 10 consecutive transmembrane segments (helical) span residues 79–99 (GLILSSVFFGMVVVQAPVGYL), 117–137 (SLMSLLLPPAAQVGAALVIVC), 176–196 (FVMGPFIVLLVSGFICDLLGW), 199–219 (VFYIFGIVGCVLSLSWFFLFF), 260–280 (LPLWAIILNSFAFIWSNSLLV), 304–324 (LPYLLAYICGILAGQMSDFFL), 337–356 (LFTTLGSFCPVIFIMCLLYL), 363–383 (TVIFLTLANSTLSFSYCGQLI), 399–419 (VTALIGMFGGLISSTLAGLIL), and 429–449 (KIFFLMAGINVTCLVFYFLFA).

It belongs to the major facilitator superfamily. Sodium/anion cotransporter family. In terms of assembly, interacts with PDZK1. As to expression, kidney.

The protein localises to the apical cell membrane. The catalysed reaction is 3 Na(+)(out) + phosphate(out) = 3 Na(+)(in) + phosphate(in). The enzyme catalyses urate(out) = urate(in). Important for the resorption of phosphate by the kidney. May be involved in actively transporting phosphate into cells via Na(+) cotransport in the renal brush border membrane. Plays a role in urate transport in the kidney. The sequence is that of Sodium-dependent phosphate transport protein 1 (Slc17a1) from Mus musculus (Mouse).